We begin with the raw amino-acid sequence, 142 residues long: Putative pre-16S rRNA nuclease (142 aa).

The protein belongs to the YqgF nuclease family.

The protein localises to the cytoplasm. Its function is as follows. Could be a nuclease involved in processing of the 5'-end of pre-16S rRNA. The sequence is that of Putative pre-16S rRNA nuclease from Lactobacillus delbrueckii subsp. bulgaricus (strain ATCC BAA-365 / Lb-18).